The chain runs to 870 residues: DNA mismatch repair protein MutS (870 aa).

622 to 629 (GPNMGGKS) is a binding site for ATP.

The protein belongs to the DNA mismatch repair MutS family.

Functionally, this protein is involved in the repair of mismatches in DNA. It is possible that it carries out the mismatch recognition step. This protein has a weak ATPase activity. The sequence is that of DNA mismatch repair protein MutS from Methylibium petroleiphilum (strain ATCC BAA-1232 / LMG 22953 / PM1).